Reading from the N-terminus, the 253-residue chain is 5'-nucleotidase SurE (253 aa).

Positions 8, 9, 39, and 92 each coordinate a divalent metal cation.

It belongs to the SurE nucleotidase family. A divalent metal cation is required as a cofactor.

The protein localises to the cytoplasm. The catalysed reaction is a ribonucleoside 5'-phosphate + H2O = a ribonucleoside + phosphate. Nucleotidase that shows phosphatase activity on nucleoside 5'-monophosphates. This is 5'-nucleotidase SurE from Burkholderia vietnamiensis (strain G4 / LMG 22486) (Burkholderia cepacia (strain R1808)).